The primary structure comprises 460 residues: Cysteine--tRNA ligase (460 aa).

Cys-28 contacts Zn(2+). The 'HIGH' region motif lies at 30–40 (MTVYDYCHLGH). Residues Cys-209, His-234, and Glu-238 each contribute to the Zn(2+) site. A 'KMSKS' region motif is present at residues 266-270 (KMSKS). ATP is bound at residue Lys-269.

This sequence belongs to the class-I aminoacyl-tRNA synthetase family. In terms of assembly, monomer. The cofactor is Zn(2+).

It localises to the cytoplasm. The catalysed reaction is tRNA(Cys) + L-cysteine + ATP = L-cysteinyl-tRNA(Cys) + AMP + diphosphate. The polypeptide is Cysteine--tRNA ligase (Pseudomonas aeruginosa (strain LESB58)).